We begin with the raw amino-acid sequence, 265 residues long: MNLQDIAKIREVNPVVVNYANFVTPFLVANGLNAVGASPIMSDEVSEAEELVQLASAVVINAGASRKESWPLMNKLCEAANQYQKPLVLDPVAVGATQYRKALNLMLLEKYHFDVIRGNIGEIAVLAGIDWQTRGIDAGNGTGDMSAVVQACAQKFKNVVIASGEVDYISDGQQVITVHNNTKLLPAIVGSGDLLSSIVGAFSAVAENTLDAAVTASLVLSCAGERAAAQLDQQNRPGSFLSYLLDELANITPEQVQDLMKIGEA.

Position 41 (methionine 41) interacts with substrate. 2 residues coordinate ATP: arginine 117 and serine 163. Residue glycine 190 coordinates substrate.

Belongs to the Thz kinase family. Mg(2+) is required as a cofactor.

It catalyses the reaction 5-(2-hydroxyethyl)-4-methylthiazole + ATP = 4-methyl-5-(2-phosphooxyethyl)-thiazole + ADP + H(+). It functions in the pathway cofactor biosynthesis; thiamine diphosphate biosynthesis; 4-methyl-5-(2-phosphoethyl)-thiazole from 5-(2-hydroxyethyl)-4-methylthiazole: step 1/1. Catalyzes the phosphorylation of the hydroxyl group of 4-methyl-5-beta-hydroxyethylthiazole (THZ). This chain is Hydroxyethylthiazole kinase, found in Pediococcus pentosaceus (strain ATCC 25745 / CCUG 21536 / LMG 10740 / 183-1w).